An 86-amino-acid polypeptide reads, in one-letter code: MANIKSQQKRNRTNERARLRNKAVKSSLRTAVRAFREAAHAGDKAKAAELLASTNRKLDKAASKGVIHKNQAANKKSALAQALNKL.

The interval 1-25 (MANIKSQQKRNRTNERARLRNKAVK) is disordered.

Belongs to the bacterial ribosomal protein bS20 family.

Its function is as follows. Binds directly to 16S ribosomal RNA. The protein is Small ribosomal subunit protein bS20 of Mycobacterium bovis (strain ATCC BAA-935 / AF2122/97).